An 802-amino-acid polypeptide reads, in one-letter code: Acetyl-CoA decarbonylase/synthase complex subunit alpha (802 aa).

Residues cysteine 69, cysteine 72, cysteine 73, cysteine 75, cysteine 80, and cysteine 90 each contribute to the [4Fe-4S] cluster site. Residue histidine 113 coordinates CO. Histidine 246, cysteine 274, and cysteine 319 together coordinate [Ni-4Fe-4S] cluster. 2 consecutive 4Fe-4S ferredoxin-type domains span residues 404–432 (EELK…ISEA) and 442–473 (SKFE…VIEK). Residues cysteine 413, cysteine 416, cysteine 419, cysteine 423, cysteine 451, cysteine 454, cysteine 457, and cysteine 461 each contribute to the [4Fe-4S] cluster site. The [Ni-4Fe-4S] cluster site is built by cysteine 519, cysteine 548, and cysteine 583.

The protein belongs to the Ni-containing carbon monoxide dehydrogenase family. Heterotetramer of two alpha and two epsilon subunits. The ACDS complex is made up of alpha, epsilon, beta, gamma and delta subunits with a probable stoichiometry of (alpha(2)epsilon(2))(4)-beta(8)-(gamma(1)delta(1))(8). It depends on [4Fe-4S] cluster as a cofactor. The cofactor is [Ni-4Fe-4S] cluster.

The enzyme catalyses CO + 2 oxidized [2Fe-2S]-[ferredoxin] + H2O = 2 reduced [2Fe-2S]-[ferredoxin] + CO2 + 2 H(+). It functions in the pathway one-carbon metabolism; methanogenesis from acetate. In terms of biological role, part of the ACDS complex that catalyzes the reversible cleavage of acetyl-CoA, allowing growth on acetate as sole source of carbon and energy. The alpha-epsilon subcomponent functions as a carbon monoxide dehydrogenase. This Methanococcoides burtonii (strain DSM 6242 / NBRC 107633 / OCM 468 / ACE-M) protein is Acetyl-CoA decarbonylase/synthase complex subunit alpha.